The chain runs to 1609 residues: Laminin subunit gamma-1 (1609 aa).

A signal peptide spans 1–33 (MRGSHRAAPALRPRGRLWPVLAVLAAAAAAGCA). In terms of domain architecture, Laminin N-terminal spans 46–285 (RPQRCMPEFV…AISDFAVGGR (240 aa)). N-linked (GlcNAc...) asparagine glycans are attached at residues N60 and N134. Cystine bridges form between C286/C295, C288/C305, C307/C316, C319/C339, C342/C351, C344/C367, C370/C379, C382/C395, C398/C410, C400/C416, C418/C427, C430/C442, C445/C456, C447/C463, C465/C474, and C477/C492. Laminin EGF-like domains follow at residues 286-341 (CKCN…ECLP), 342-397 (CDCN…ACSS), 398-444 (CHCS…GCRP), and 445-494 (CSCD…GCTP). The 10-residue stretch at 495 to 504 (CFCFGHSSVC) folds into the Laminin EGF-like 5; first part domain. The 176-residue stretch at 514–689 (SISSTFQIDE…PGVPATWVES (176 aa)) folds into the Laminin IV type A domain. N-linked (GlcNAc...) asparagine glycosylation is found at N576 and N650. One can recognise a Laminin EGF-like 5; second part domain in the interval 690 to 723 (CTCPVGYGGQFCEMCLSGYRRETPNLGPYSPCVL). Disulfide bonds link C724–C733, C726–C740, C742–C751, C754–C770, C773–C781, C775–C792, C795–C804, C807–C825, C828–C842, C830–C849, C852–C861, C864–C881, C884–C898, C886–C905, C907–C916, C919–C932, C935–C947, C937–C954, C956–C965, C968–C980, C983–C995, C985–C1001, C1003–C1012, and C1015–C1028. Laminin EGF-like domains lie at 724-772 (CACN…DCQP), 773-827 (CPCP…LCRL), 828-883 (CQCS…KCKA), 884-934 (CNCN…GCER), 935-982 (CDCH…GCKP), and 983-1030 (CDCH…GCQE). N-linked (GlcNAc...) asparagine glycans are attached at residues N1022 and N1107. Residues 1030-1609 (ECPACYRLVK…CFNTPSIEKP (580 aa)) are domain II and I. Residues 1038-1609 (VKDKVADHRV…CFNTPSIEKP (572 aa)) adopt a coiled-coil conformation. Phosphoserine; by FAM20C is present on S1149. N1161, N1175, N1205, N1223, N1241, N1380, N1395, and N1439 each carry an N-linked (GlcNAc...) asparagine glycan. At S1493 the chain carries Phosphoserine.

In terms of assembly, laminin is a complex glycoprotein, consisting of three different polypeptide chains (alpha, beta, gamma), which are bound to each other by disulfide bonds into a cross-shaped molecule comprising one long and three short arms with globules at each end. Gamma-1 is a subunit of laminin-1 (laminin-111 or EHS laminin), laminin-2 (laminin-211 or merosin), laminin-3 (laminin-121 or S-laminin), laminin-4 (laminin-221 or S-merosin), laminin-6 (laminin-311 or K-laminin), laminin-7 (laminin-321 or KS-laminin), laminin-8 (laminin-411), laminin-9 (laminin-421), laminin-10 (laminin-511) and laminin-11 (laminin-521). Interacts with SVEP1. In terms of tissue distribution, found in the basement membranes (major component).

It localises to the secreted. The protein localises to the extracellular space. The protein resides in the extracellular matrix. It is found in the basement membrane. Functionally, binding to cells via a high affinity receptor, laminin is thought to mediate the attachment, migration and organization of cells into tissues during embryonic development by interacting with other extracellular matrix components. The chain is Laminin subunit gamma-1 from Homo sapiens (Human).